We begin with the raw amino-acid sequence, 249 residues long: Proteasome subunit alpha 2 (249 aa).

Methionine 1 is subject to N-acetylmethionine.

This sequence belongs to the peptidase T1A family. The 20S proteasome core is composed of 14 alpha and 14 beta subunits that assemble into four stacked heptameric rings, resulting in a barrel-shaped structure. The two inner rings, each composed of seven catalytic beta subunits, are sandwiched by two outer rings, each composed of seven alpha subunits. H.volcanii produces at least 2 types of 20S proteasomes: an alpha1-beta proteasome and a proteasome containing all three subunits (alpha1, alpha2, and beta) that appears to be asymmetrical with homo-oligomeric alpha1 and alpha2 rings positioned on separate ends. The catalytic chamber with the active sites is on the inside of the barrel. Has probably a gated structure, the ends of the cylinder being occluded by the N-termini of the alpha-subunits. Is likely capped at one or both ends by the proteasome regulatory ATPase, PAN.

The protein resides in the cytoplasm. Its activity is regulated as follows. The formation of the proteasomal ATPase PAN-20S proteasome complex, via the docking of the C-termini of PAN into the intersubunit pockets in the alpha-rings, triggers opening of the gate for substrate entry. Interconversion between the open-gate and close-gate conformations leads to a dynamic regulation of the 20S proteasome proteolysis activity. In terms of biological role, component of the proteasome core, a large protease complex with broad specificity involved in protein degradation. The H.volcanii alpha1-beta-alpha2 proteasome is able to cleave oligopeptides after Tyr and thus displays chymotrypsin-like activity. In Haloferax volcanii (strain ATCC 29605 / DSM 3757 / JCM 8879 / NBRC 14742 / NCIMB 2012 / VKM B-1768 / DS2) (Halobacterium volcanii), this protein is Proteasome subunit alpha 2.